Reading from the N-terminus, the 585-residue chain is Aspartate--tRNA(Asp/Asn) ligase (585 aa).

E175 contacts L-aspartate. The interval 199–202 is aspartate; it reads QLFK. R221 is an L-aspartate binding site. Residues 221-223 and Q230 contribute to the ATP site; that span reads RDE. H448 serves as a coordination point for L-aspartate. Residue E482 participates in ATP binding. R489 lines the L-aspartate pocket. 534 to 537 is a binding site for ATP; it reads GLDR.

The protein belongs to the class-II aminoacyl-tRNA synthetase family. Type 1 subfamily. As to quaternary structure, homodimer.

The protein resides in the cytoplasm. It carries out the reaction tRNA(Asx) + L-aspartate + ATP = L-aspartyl-tRNA(Asx) + AMP + diphosphate. In terms of biological role, aspartyl-tRNA synthetase with relaxed tRNA specificity since it is able to aspartylate not only its cognate tRNA(Asp) but also tRNA(Asn). Reaction proceeds in two steps: L-aspartate is first activated by ATP to form Asp-AMP and then transferred to the acceptor end of tRNA(Asp/Asn). The chain is Aspartate--tRNA(Asp/Asn) ligase from Natranaerobius thermophilus (strain ATCC BAA-1301 / DSM 18059 / JW/NM-WN-LF).